The primary structure comprises 311 residues: tRNA-cytidine(32) 2-sulfurtransferase (311 aa).

Positions 45–50 (SGGKDS) match the PP-loop motif motif. [4Fe-4S] cluster-binding residues include cysteine 120, cysteine 123, and cysteine 211.

The protein belongs to the TtcA family. As to quaternary structure, homodimer. The cofactor is Mg(2+). [4Fe-4S] cluster serves as cofactor.

The protein localises to the cytoplasm. The enzyme catalyses cytidine(32) in tRNA + S-sulfanyl-L-cysteinyl-[cysteine desulfurase] + AH2 + ATP = 2-thiocytidine(32) in tRNA + L-cysteinyl-[cysteine desulfurase] + A + AMP + diphosphate + H(+). Its pathway is tRNA modification. Its function is as follows. Catalyzes the ATP-dependent 2-thiolation of cytidine in position 32 of tRNA, to form 2-thiocytidine (s(2)C32). The sulfur atoms are provided by the cysteine/cysteine desulfurase (IscS) system. This is tRNA-cytidine(32) 2-sulfurtransferase from Shewanella pealeana (strain ATCC 700345 / ANG-SQ1).